Consider the following 226-residue polypeptide: Probable GPI-anchored adhesin-like protein PGA28 (226 aa).

Positions 1–26 (MKFFAYFAVIALSSASLINLFKRATA) are cleaved as a signal peptide. Positions 119–209 (DTEATTGSDT…SQQTSSHAGG (91 aa)) are disordered. Residues 131–148 (KAATGATTSAGTGVTKTS) are compositionally biased toward low complexity. Residues 149 to 160 (ETGGVSSTANSE) are compositionally biased toward polar residues. The segment covering 161 to 208 (AKSGSVTTSKSGSTSISESKTTSGSSSSGKSSSSTSSASSQQTSSHAG) has biased composition (low complexity). A lipid anchor (GPI-anchor amidated serine) is attached at serine 197. Positions 198-226 (ASSQQTSSHAGGASGAFVSLLGLFAALLI) are cleaved as a propeptide — removed in mature form.

In terms of processing, predicted to be a cleavage substrate for KEX2.

It localises to the cell membrane. In terms of biological role, putative adhesin which is involved in cell adhesion and virulence. Plays a role in Candida-bacterial interactions and subsequent regulation of filamentation. This Candida albicans (strain SC5314 / ATCC MYA-2876) (Yeast) protein is Probable GPI-anchored adhesin-like protein PGA28 (PGA28).